A 715-amino-acid chain; its full sequence is Eosinophil peroxidase (715 aa).

An N-terminal signal peptide occupies residues 1 to 17 (MHLLPALAGVLATLVLA). Residues 18–139 (QPCEGTDPAS…SGCALRDQAE (122 aa)) constitute a propeptide that is removed on maturation. Residues Asn52 and Asn113 are each glycosylated (N-linked (GlcNAc...) asparagine). The cysteines at positions 141 and 152 are disulfide-linked. Position 232 (Asp232) interacts with heme b. The active-site Proton acceptor is the His233. A Ca(2+)-binding site is contributed by Asp234. Disulfide bonds link Cys253-Cys263 and Cys257-Cys281. 4 residues coordinate Ca(2+): Thr306, Phe308, Asp310, and Ser312. N-linked (GlcNAc...) asparagine glycosylation is found at Asn327 and Asn363. The cysteines at positions 359 and 370 are disulfide-linked. Positions 380 and 474 each coordinate heme b. 3'-nitrotyrosine is present on Tyr488. Cystine bridges form between Cys578–Cys635 and Cys676–Cys701. Residues Asn700 and Asn708 are each glycosylated (N-linked (GlcNAc...) asparagine).

The protein belongs to the peroxidase family. XPO subfamily. In terms of assembly, tetramer of two light chains and two heavy chains. Requires Ca(2+) as cofactor. Heme b serves as cofactor.

The protein resides in the cytoplasmic granule. The enzyme catalyses 2 a phenolic donor + H2O2 = 2 a phenolic radical donor + 2 H2O. In terms of biological role, mediates tyrosine nitration of secondary granule proteins in mature resting eosinophils. Shows significant inhibitory activity towards Mycobacterium tuberculosis H37Rv by inducing bacterial fragmentation and lysis. In Homo sapiens (Human), this protein is Eosinophil peroxidase (EPX).